A 467-amino-acid polypeptide reads, in one-letter code: 3-isopropylmalate dehydratase large subunit (467 aa).

Residues Cys-347, Cys-407, and Cys-410 each coordinate [4Fe-4S] cluster.

The protein belongs to the aconitase/IPM isomerase family. LeuC type 1 subfamily. Heterodimer of LeuC and LeuD. [4Fe-4S] cluster is required as a cofactor.

The enzyme catalyses (2R,3S)-3-isopropylmalate = (2S)-2-isopropylmalate. It functions in the pathway amino-acid biosynthesis; L-leucine biosynthesis; L-leucine from 3-methyl-2-oxobutanoate: step 2/4. Functionally, catalyzes the isomerization between 2-isopropylmalate and 3-isopropylmalate, via the formation of 2-isopropylmaleate. This chain is 3-isopropylmalate dehydratase large subunit, found in Synechococcus sp. (strain JA-3-3Ab) (Cyanobacteria bacterium Yellowstone A-Prime).